We begin with the raw amino-acid sequence, 420 residues long: Tol-Pal system protein TolB (420 aa).

The first 21 residues, 1-21 (MKLFVHLVLFISLFIPYFTKA), serve as a signal peptide directing secretion.

Belongs to the TolB family. In terms of assembly, the Tol-Pal system is composed of five core proteins: the inner membrane proteins TolA, TolQ and TolR, the periplasmic protein TolB and the outer membrane protein Pal. They form a network linking the inner and outer membranes and the peptidoglycan layer.

Its subcellular location is the periplasm. Its function is as follows. Part of the Tol-Pal system, which plays a role in outer membrane invagination during cell division and is important for maintaining outer membrane integrity. In Wolbachia sp. subsp. Drosophila simulans (strain wRi), this protein is Tol-Pal system protein TolB.